Reading from the N-terminus, the 57-residue chain is Large ribosomal subunit protein bL32c (57 aa).

This sequence belongs to the bacterial ribosomal protein bL32 family.

It localises to the plastid. It is found in the chloroplast. The polypeptide is Large ribosomal subunit protein bL32c (Drimys granadensis).